The primary structure comprises 439 residues: Mitochondrial distribution and morphology protein 12 (439 aa).

The region spanning 1–439 (MSIDINWEAA…VYPSFWTFLV (439 aa)) is the SMP-LTD domain. A compositionally biased stretch (acidic residues) spans 71–84 (EEDEGDEDFSDDQD). 3 disordered regions span residues 71 to 104 (EEDE…GTWQ), 182 to 278 (TPLA…HEKK), and 362 to 385 (YIPG…RRDD). The segment covering 212-229 (DYPRPVHRQTDTDIDSGH) has biased composition (basic and acidic residues). Over residues 230 to 255 (SRPSTADTLNSINSQRISNPALSHPH) the composition is skewed to polar residues. A compositionally biased stretch (basic and acidic residues) spans 256-269 (SSNESHPDTRDHSP).

Belongs to the MDM12 family. In terms of assembly, component of the ER-mitochondria encounter structure (ERMES) or MDM complex, composed of MMM1, MDM10, MDM12 and MDM34. An MMM1 homodimer associates with one molecule of MDM12 on each side in a pairwise head-to-tail manner, and the SMP-LTD domains of MMM1 and MDM12 generate a continuous hydrophobic tunnel for phospholipid trafficking.

The protein localises to the mitochondrion outer membrane. It is found in the endoplasmic reticulum membrane. Its function is as follows. Component of the ERMES/MDM complex, which serves as a molecular tether to connect the endoplasmic reticulum (ER) and mitochondria. Components of this complex are involved in the control of mitochondrial shape and protein biogenesis, and function in nonvesicular lipid trafficking between the ER and mitochondria. MDM12 is required for the interaction of the ER-resident membrane protein MMM1 and the outer mitochondrial membrane-resident beta-barrel protein MDM10. The MDM12-MMM1 subcomplex functions in the major beta-barrel assembly pathway that is responsible for biogenesis of all mitochondrial outer membrane beta-barrel proteins, and acts in a late step after the SAM complex. The MDM10-MDM12-MMM1 subcomplex further acts in the TOM40-specific pathway after the action of the MDM12-MMM1 complex. Essential for establishing and maintaining the structure of mitochondria and maintenance of mtDNA nucleoids. The polypeptide is Mitochondrial distribution and morphology protein 12 (Uncinocarpus reesii (strain UAMH 1704)).